The following is an 89-amino-acid chain: Acylphosphatase (89 aa).

The Acylphosphatase-like domain occupies Ala3–Pro89. Residues Arg18 and Asn36 contribute to the active site.

Belongs to the acylphosphatase family.

The enzyme catalyses an acyl phosphate + H2O = a carboxylate + phosphate + H(+). The protein is Acylphosphatase (acyP) of Pseudothermotoga lettingae (strain ATCC BAA-301 / DSM 14385 / NBRC 107922 / TMO) (Thermotoga lettingae).